Here is a 303-residue protein sequence, read N- to C-terminus: Cell division protein ZipA (303 aa).

Residues 1 to 6 (MMQDLR) are Periplasmic-facing. The helical transmembrane segment at 7-27 (LILIIVGAIAIIALLLHGLWT) threads the bilayer. The Cytoplasmic portion of the chain corresponds to 28–303 (SRKERSSLFR…RIRSTLGVQV (276 aa)). Disordered stretches follow at residues 39–61 (RPVK…DEAF), 66–85 (KPYA…EPAI), and 124–159 (EQEP…GEKE). 2 stretches are compositionally biased toward basic and acidic residues: residues 75-85 (SHQEYKAEPAI) and 139-159 (ESER…GEKE).

This sequence belongs to the ZipA family. Interacts with FtsZ via their C-terminal domains.

The protein localises to the cell inner membrane. Functionally, essential cell division protein that stabilizes the FtsZ protofilaments by cross-linking them and that serves as a cytoplasmic membrane anchor for the Z ring. Also required for the recruitment to the septal ring of downstream cell division proteins. The protein is Cell division protein ZipA of Photorhabdus laumondii subsp. laumondii (strain DSM 15139 / CIP 105565 / TT01) (Photorhabdus luminescens subsp. laumondii).